We begin with the raw amino-acid sequence, 247 residues long: ATP synthase subunit a, chloroplastic (247 aa).

Transmembrane regions (helical) follow at residues 38–58, 95–115, 134–154, 199–219, and 220–240; these read QVLITSWVVIAILLGSATLAV, VPFIGTMFLFIFVSNWSGALL, INTTVALALLTSVAYFYAGLT, LVVVVLVSLVPSIVPIPVMFL, and GLFTSGIQALIFATLAAAYIG.

It belongs to the ATPase A chain family. In terms of assembly, F-type ATPases have 2 components, CF(1) - the catalytic core - and CF(0) - the membrane proton channel. CF(1) has five subunits: alpha(3), beta(3), gamma(1), delta(1), epsilon(1). CF(0) has four main subunits: a, b, b' and c.

It is found in the plastid. It localises to the chloroplast thylakoid membrane. Key component of the proton channel; it plays a direct role in the translocation of protons across the membrane. In Vitis vinifera (Grape), this protein is ATP synthase subunit a, chloroplastic.